Here is a 1069-residue protein sequence, read N- to C-terminus: Acyl-CoA dehydrogenase family member 10 (1069 aa).

K413 is subject to N6-succinyllysine. An N6-acetyllysine; alternate modification is found at K427. The residue at position 427 (K427) is an N6-succinyllysine; alternate. FAD-binding positions include 792–802, S828, R943, Q1013, and E1044; that span reads FAMTEPQVASS. Residue K1052 is modified to N6-acetyllysine; alternate. Residue K1052 is modified to N6-succinyllysine; alternate.

Belongs to the acyl-CoA dehydrogenase family. FAD is required as a cofactor.

The enzyme catalyses a 2,3-saturated acyl-CoA + A = a 2,3-dehydroacyl-CoA + AH2. In terms of biological role, acyl-CoA dehydrogenase only active with R- and S-2-methyl-C15-CoA. This chain is Acyl-CoA dehydrogenase family member 10 (Acad10), found in Mus musculus (Mouse).